The sequence spans 312 residues: uncharacterized protein (312 aa).

A run of 10 helical transmembrane segments spans residues 11 to 31 (IAAI…KIAL), 46 to 66 (IAFA…SIRV), 72 to 92 (ILPL…FGLV), 98 to 118 (EAGI…AYVL), 128 to 148 (GFTV…GVDV), 155 to 171 (GSLL…MYNT), 183 to 203 (TELT…IALV), 221 to 241 (PGFV…TSFL), 254 to 274 (MSAF…VILN), and 277 to 297 (LAWY…GSNI). EamA domains follow at residues 18–142 (FIIG…FIFV) and 164–297 (LSSA…GSNI).

It belongs to the EamA transporter family.

Its subcellular location is the cell membrane. This is an uncharacterized protein from Bacillus subtilis (strain 168).